Here is a 456-residue protein sequence, read N- to C-terminus: Alcohol acyltransferase 17 (456 aa).

Residues histidine 166 and aspartate 382 each act as proton acceptor in the active site.

It belongs to the plant acyltransferase family. As to expression, expressed in fruit.

Functionally, involved in the biosynthesis of volatile esters which confer kiwifruit flavor. Alcohol acyl transferase that can use a wide range of alcohols as substrate to produce esters. In Actinidia deliciosa (Kiwi), this protein is Alcohol acyltransferase 17.